A 338-amino-acid polypeptide reads, in one-letter code: Structural protein VP9 (338 aa).

Its subcellular location is the virion. Functionally, plays an important role in virus transmission by the insect vector. May participate in the virus stability by binding clamp proteins and surrounding the pentameric turrets present in the virion. The protein is Structural protein VP9 of Rice ragged stunt virus (isolate Thailand) (RRSV).